A 113-amino-acid chain; its full sequence is Dolichyl-diphosphooligosaccharide--protein glycosyltransferase subunit DAD1 (113 aa).

An N-acetylserine modification is found at Ser2. The Cytoplasmic segment spans residues 2–30 (SASVLSVISRFLEEYLSATPQRLKLLDAY). The chain crosses the membrane as a helical span at residues 31–51 (LLYILLTGALQFGYCLLVGTF). A topological domain (lumenal) is located at residue Pro52. Residues 53 to 73 (FNSFLSGFISCVGSFILAVCL) traverse the membrane as a helical segment. The Cytoplasmic segment spans residues 74–92 (RIQINPQNKADFQGISPER). A helical membrane pass occupies residues 93–113 (AFADFLFASTILHLVVMNFVG).

Belongs to the DAD/OST2 family. In terms of assembly, component of the oligosaccharyltransferase (OST) complex. OST exists in two different complex forms which contain common core subunits RPN1, RPN2, OST48, OST4, DAD1 and TMEM258, either STT3A or STT3B as catalytic subunits, and form-specific accessory subunits. STT3A complex assembly occurs through the formation of 3 subcomplexes. Subcomplex 1 contains RPN1 and TMEM258, subcomplex 2 contains the STT3A-specific subunits STT3A, DC2/OSTC, and KCP2 as well as the core subunit OST4, and subcomplex 3 contains RPN2, DAD1, and OST48. The STT3A complex can form stable complexes with the Sec61 complex or with both the Sec61 and TRAP complexes.

It is found in the endoplasmic reticulum membrane. Its pathway is protein modification; protein glycosylation. Subunit of the oligosaccharyl transferase (OST) complex that catalyzes the initial transfer of a defined glycan (Glc(3)Man(9)GlcNAc(2) in eukaryotes) from the lipid carrier dolichol-pyrophosphate to an asparagine residue within an Asn-X-Ser/Thr consensus motif in nascent polypeptide chains, the first step in protein N-glycosylation. N-glycosylation occurs cotranslationally and the complex associates with the Sec61 complex at the channel-forming translocon complex that mediates protein translocation across the endoplasmic reticulum (ER). All subunits are required for a maximal enzyme activity. The protein is Dolichyl-diphosphooligosaccharide--protein glycosyltransferase subunit DAD1 of Bos taurus (Bovine).